The chain runs to 112 residues: Putative galactitol utilization operon repressor (112 aa).

An HTH deoR-type domain is found at 5–60; sequence SFERRNKIIQLVNEQGTVLVQDLAGVFAASEATIRADLRFLEQKGVVTRFHGGAAK. Positions 22–41 form a DNA-binding region, H-T-H motif; sequence VLVQDLAGVFAASEATIRAD.

Its function is as follows. Repressor of the gat operon for galacticol transport and metabolism. In K12 strains the operon is constitutively expressed because this gene is inactive. This is Putative galactitol utilization operon repressor (gatR) from Escherichia coli (strain K12).